A 210-amino-acid chain; its full sequence is MTDETTKNGPDATAADAAADAAAYVENDTVQEETAQPDPLELLKAENSELRDRYLRLAAEMDNLRRRTEREVKDAKSYSVAGFARDMLAVSDNLRRALDAISPEAKATADAGLTSLIEGVEMTERAMLSALERHGVRKLEPVGQKFDPNFHQAMFEVPNSEVPNNTVVQVVQAGFTIGERVLRPAMVGVAKGGPKPAEAETNSVFDEKDA.

The interval 191 to 210 (KGGPKPAEAETNSVFDEKDA) is disordered.

The protein belongs to the GrpE family. Homodimer.

The protein localises to the cytoplasm. Participates actively in the response to hyperosmotic and heat shock by preventing the aggregation of stress-denatured proteins, in association with DnaK and GrpE. It is the nucleotide exchange factor for DnaK and may function as a thermosensor. Unfolded proteins bind initially to DnaJ; upon interaction with the DnaJ-bound protein, DnaK hydrolyzes its bound ATP, resulting in the formation of a stable complex. GrpE releases ADP from DnaK; ATP binding to DnaK triggers the release of the substrate protein, thus completing the reaction cycle. Several rounds of ATP-dependent interactions between DnaJ, DnaK and GrpE are required for fully efficient folding. The sequence is that of Protein GrpE from Rhizobium etli (strain CIAT 652).